The sequence spans 229 residues: Orotate phosphoribosyltransferase (229 aa).

5-phospho-alpha-D-ribose 1-diphosphate-binding positions include R107, K108, K111, H113, and 133–141 (EDLTTAGGS). T137 is an orotate binding site.

This sequence belongs to the purine/pyrimidine phosphoribosyltransferase family. PyrE subfamily. Homodimer. The cofactor is Mg(2+).

It catalyses the reaction orotidine 5'-phosphate + diphosphate = orotate + 5-phospho-alpha-D-ribose 1-diphosphate. The protein operates within pyrimidine metabolism; UMP biosynthesis via de novo pathway; UMP from orotate: step 1/2. In terms of biological role, catalyzes the transfer of a ribosyl phosphate group from 5-phosphoribose 1-diphosphate to orotate, leading to the formation of orotidine monophosphate (OMP). This is Orotate phosphoribosyltransferase from Rhizobium etli (strain CIAT 652).